The sequence spans 353 residues: MPPPQRFRVQSKNYFLTYPRCTIPKEEALSQLQKIHTTTNKKFIKVCEERHDNGEPHLHALIQFEGKFICTNKRLFDLVSTTRSAHFHPNIQGAKSSSDVKEYIDKDGVTIEWGQFQVDGRSARGGQQSANDSYAKALNADSIESALTILKEEQPKDYVLQNHNIRSNLERIFFKVPEPWVPPFPLSSFVNIPVVMQDWVDDYFGRGSAARPERPISIIVEGDSRTGKTMWARALGPHNYLSGHLDFNSRVYSNSVEYNVIDDISPNYLKLKHWKELIGAQKDWQSNCKYGKPVQIKGGIPSIVLCNPGEGSSYKDFLNKEENRALHNWTIHNAIFVTLTAPLYQSTAQDCQT.

The CRESS-DNA virus Rep endonuclease domain maps to 8 to 116 (RVQSKNYFLT…DGVTIEWGQF (109 aa)). The short motif at 15-18 (FLTY) is the RCR-1 element. 3 residues coordinate a divalent metal cation: Glu-49, His-57, and His-59. The RCR-2 motif lies at 57 to 59 (HLH). The active-site For DNA cleavage activity is the Tyr-103. The short motif at 103-106 (YIDK) is the RCR-3 element. Asp-107 provides a ligand contact to a divalent metal cation. The segment at 143–153 (IESALTILKEE) is binding to RBR1. The tract at residues 156–176 (KDYVLQNHNIRSNLERIFFKV) is oligomerization. 222–229 (GDSRTGKT) is an ATP binding site.

Belongs to the geminiviridae Rep protein family. As to quaternary structure, homooligomer. Interacts with the replication enhancer protein (REn). Interacts with host retinoblastoma-related protein 1 (RBR1), and may thereby induce the transcription of host replicative enzymes even if the cell is not dividing anymore. Interacts with host PCNA. Interacts with host SCE1 protein. Binds to host RAD54 protein to ensure geminiviral replication. Mg(2+) is required as a cofactor. It depends on Mn(2+) as a cofactor.

Its subcellular location is the host nucleus. In terms of biological role, essential for the replication of viral ssDNA. The closed circular ssDNA genome is first converted to a superhelical dsDNA. Rep binds a specific region at the genome origin of replication. It introduces an endonucleolytic nick within the conserved sequence 5'-TAATATTAC-3' in the intergenic region of the genome present in all geminiviruses, thereby initiating the rolling circle replication (RCR). Following cleavage, binds covalently to the 5'-phosphate of DNA as a tyrosyl ester. The cleavage gives rise to a free 3'-OH that serves as a primer for the cellular DNA polymerase. The polymerase synthesizes the (+) strand DNA by rolling circle mechanism. After one round of replication, a Rep-catalyzed nucleotidyl transfer reaction releases a circular single-stranded virus genome, thereby terminating the replication. Displays origin-specific DNA cleavage, nucleotidyl transferase, ATPase and helicase activities. The polypeptide is Replication-associated protein (Macroptilium lathyroides (Lima bean)).